Consider the following 175-residue polypeptide: Translation initiation factor IF-3 (175 aa).

This sequence belongs to the IF-3 family. Monomer.

The protein localises to the cytoplasm. In terms of biological role, IF-3 binds to the 30S ribosomal subunit and shifts the equilibrium between 70S ribosomes and their 50S and 30S subunits in favor of the free subunits, thus enhancing the availability of 30S subunits on which protein synthesis initiation begins. The sequence is that of Translation initiation factor IF-3 from Aquifex aeolicus (strain VF5).